The chain runs to 348 residues: Protein disulfide isomerase CRELD2 (348 aa).

The first 22 residues, 1-22, serve as a signal peptide directing secretion; the sequence is MHLPPAAAVGLLLLLLPPPARV. Residues 30–33 carry the CXXC motif; it reads CQRC. 4 cysteine pairs are disulfide-bonded: cysteine 30–cysteine 33, cysteine 139–cysteine 153, cysteine 147–cysteine 165, and cysteine 167–cysteine 176. The EGF-like 1 domain maps to 135-177; that stretch reads DCQECQGGSQRPCSGNGHCDGDGSRQGDGSCQCHVGYKGPLCI. The FU 1 repeat unit spans residues 192 to 239; the sequence is HSFCTACDESCKTCSGPTNKGCVECEVGWTRVEDACVDVDECAAETPP. A glycan (N-linked (GlcNAc...) asparagine) is linked at asparagine 250. One copy of the FU 2 repeat lies at 252–299; that stretch reads SYTCEECDSTCVGCTGKGPANCKECISGYSKQKGECADIDECSLETKV. A CXXC motif is present at residues 262–265; it reads CVGC. 4 disulfides stabilise this stretch: cysteine 262/cysteine 265, cysteine 293/cysteine 307, cysteine 300/cysteine 316, and cysteine 318/cysteine 328. One can recognise an EGF-like 2; calcium-binding domain in the interval 289–329; sequence DIDECSLETKVCKKENENCYNTPGSFVCVCPEGFEEDRRCL.

It belongs to the CRELD family. In terms of assembly, interacts with CHRNA4. Component of a complex containing at least CRELD2, MANF, MATN3 and PDIA4.

Its subcellular location is the endoplasmic reticulum. It catalyses the reaction Catalyzes the rearrangement of -S-S- bonds in proteins.. In terms of biological role, protein disulfide isomerase. Might play a role in the unfolded protein response. May regulate transport of alpha4-beta2 neuronal acetylcholine receptor. The polypeptide is Protein disulfide isomerase CRELD2 (CRELD2) (Cricetulus griseus (Chinese hamster)).